A 488-amino-acid polypeptide reads, in one-letter code: Proline--tRNA ligase (488 aa).

It belongs to the class-II aminoacyl-tRNA synthetase family. ProS type 3 subfamily. Homodimer.

Its subcellular location is the cytoplasm. It carries out the reaction tRNA(Pro) + L-proline + ATP = L-prolyl-tRNA(Pro) + AMP + diphosphate. Its function is as follows. Catalyzes the attachment of proline to tRNA(Pro) in a two-step reaction: proline is first activated by ATP to form Pro-AMP and then transferred to the acceptor end of tRNA(Pro). The chain is Proline--tRNA ligase from Pyrobaculum islandicum (strain DSM 4184 / JCM 9189 / GEO3).